Consider the following 264-residue polypeptide: Hemin import ATP-binding protein HmuV (264 aa).

The region spanning 2-241 (IEVSGVSVRL…ETMLAVFGCA (240 aa)) is the ABC transporter domain. 34 to 41 (GPNGSGKT) contacts ATP.

The protein belongs to the ABC transporter superfamily. Heme (hemin) importer (TC 3.A.1.14.5) family. The complex is composed of two ATP-binding proteins (HmuV), two transmembrane proteins (HmuU) and a solute-binding protein (HmuT).

The protein resides in the cell inner membrane. Part of the ABC transporter complex HmuTUV involved in hemin import. Responsible for energy coupling to the transport system. In Rhizobium johnstonii (strain DSM 114642 / LMG 32736 / 3841) (Rhizobium leguminosarum bv. viciae), this protein is Hemin import ATP-binding protein HmuV.